The chain runs to 220 residues: Thiamine-phosphate synthase (220 aa).

4-amino-2-methyl-5-(diphosphooxymethyl)pyrimidine-binding positions include 39 to 43 (QLRDK) and Asn-80. Mg(2+)-binding residues include Asp-81 and Asp-100. Ser-119 lines the 4-amino-2-methyl-5-(diphosphooxymethyl)pyrimidine pocket. Residue 145 to 147 (TPT) coordinates 2-[(2R,5Z)-2-carboxy-4-methylthiazol-5(2H)-ylidene]ethyl phosphate. 4-amino-2-methyl-5-(diphosphooxymethyl)pyrimidine is bound at residue Lys-148. A 2-[(2R,5Z)-2-carboxy-4-methylthiazol-5(2H)-ylidene]ethyl phosphate-binding site is contributed by Gly-176.

Belongs to the thiamine-phosphate synthase family. Requires Mg(2+) as cofactor.

It catalyses the reaction 2-[(2R,5Z)-2-carboxy-4-methylthiazol-5(2H)-ylidene]ethyl phosphate + 4-amino-2-methyl-5-(diphosphooxymethyl)pyrimidine + 2 H(+) = thiamine phosphate + CO2 + diphosphate. The enzyme catalyses 2-(2-carboxy-4-methylthiazol-5-yl)ethyl phosphate + 4-amino-2-methyl-5-(diphosphooxymethyl)pyrimidine + 2 H(+) = thiamine phosphate + CO2 + diphosphate. The catalysed reaction is 4-methyl-5-(2-phosphooxyethyl)-thiazole + 4-amino-2-methyl-5-(diphosphooxymethyl)pyrimidine + H(+) = thiamine phosphate + diphosphate. The protein operates within cofactor biosynthesis; thiamine diphosphate biosynthesis; thiamine phosphate from 4-amino-2-methyl-5-diphosphomethylpyrimidine and 4-methyl-5-(2-phosphoethyl)-thiazole: step 1/1. Condenses 4-methyl-5-(beta-hydroxyethyl)thiazole monophosphate (THZ-P) and 2-methyl-4-amino-5-hydroxymethyl pyrimidine pyrophosphate (HMP-PP) to form thiamine monophosphate (TMP). In Mycobacterium ulcerans (strain Agy99), this protein is Thiamine-phosphate synthase.